The sequence spans 439 residues: Xaa-Pro dipeptidase (439 aa).

Mn(2+)-binding residues include Asp244, Asp255, His335, Glu380, and Glu419.

The protein belongs to the peptidase M24B family. Bacterial-type prolidase subfamily. Requires Mn(2+) as cofactor.

The catalysed reaction is Xaa-L-Pro dipeptide + H2O = an L-alpha-amino acid + L-proline. Splits dipeptides with a prolyl residue in the C-terminal position. The polypeptide is Xaa-Pro dipeptidase (Shewanella sediminis (strain HAW-EB3)).